The chain runs to 1171 residues: Pyruvate-flavodoxin oxidoreductase (1171 aa).

4Fe-4S ferredoxin-type domains follow at residues 682–711 (EVPV…PALL) and 736–767 (YHLA…MQSL). Cysteine 691, cysteine 694, cysteine 697, cysteine 701, cysteine 745, cysteine 748, cysteine 751, cysteine 755, cysteine 811, cysteine 814, cysteine 839, and cysteine 1072 together coordinate [4Fe-4S] cluster.

The protein belongs to the pyruvate:ferredoxin/flavodoxin oxidoreductase family. The cofactor is [4Fe-4S] cluster.

The catalysed reaction is oxidized [flavodoxin] + pyruvate + CoA + 2 H(+) = reduced [flavodoxin] + acetyl-CoA + CO2. Oxidoreductase required for the transfer of electrons from pyruvate to flavodoxin, which reduces nitrogenase. This chain is Pyruvate-flavodoxin oxidoreductase (nifJ), found in Klebsiella pneumoniae.